Here is a 126-residue protein sequence, read N- to C-terminus: Desulfoferrodoxin (126 aa).

Fe cation contacts are provided by Cys10, Cys13, Cys29, Cys30, His49, His69, His75, Cys116, and His119.

This sequence belongs to the desulfoferrodoxin family. Homodimer. Fe(3+) is required as a cofactor. It depends on Cu(2+) as a cofactor.

It carries out the reaction reduced [rubredoxin] + superoxide + 2 H(+) = oxidized [rubredoxin] + H2O2. In terms of biological role, catalyzes the one-electron reduction of superoxide anion radical to hydrogen peroxide at a nonheme ferrous iron center. Plays a fundamental role in case of oxidative stress via its superoxide detoxification activity. This chain is Desulfoferrodoxin (dfx), found in Desulfarculus baarsii (strain ATCC 33931 / DSM 2075 / LMG 7858 / VKM B-1802 / 2st14).